Consider the following 76-residue polypeptide: Proteolipid protein 2 (76 aa).

In terms of domain architecture, MARVEL spans 1–60 (ISGPWSDFFRALGAVILYLMTSIVVLVERGNNSKGAAGVLGLCAAGLFGYDAYITFPSGT). Residues 8 to 28 (FFRALGAVILYLMTSIVVLVE) form a helical membrane-spanning segment. An N-linked (GlcNAc...) asparagine glycan is attached at N31. A helical membrane pass occupies residues 36–56 (AAGVLGLCAAGLFGYDAYITF).

The protein resides in the membrane. Functionally, may play a role in cell differentiation in the intestinal epithelium. The protein is Proteolipid protein 2 (PLP2) of Ovis aries (Sheep).